A 290-amino-acid chain; its full sequence is HTH-type transcriptional regulator BudR (290 aa).

An HTH lysR-type domain is found at 1 to 58; that stretch reads MELRYLRYFVAVAEARNFTRAAHDLGISQPPLSQQIQRLEREIGTPLLRRLTRGVELT. The H-T-H motif DNA-binding region spans 18-37; the sequence is FTRAAHDLGISQPPLSQQIQ.

It belongs to the LysR transcriptional regulatory family.

In terms of biological role, regulator of the budABC operon for 2,3-butanediol synthesis. This is HTH-type transcriptional regulator BudR (budR) from Raoultella terrigena (Klebsiella terrigena).